Reading from the N-terminus, the 278-residue chain is Envelope glycoprotein L (278 aa).

The N-terminal stretch at 1-30 is a signal peptide; it reads MCRRPDCGFSFSPGPVILLWCCLLLPIVSS. Residues 43–256 form the gL betaherpesvirus-type domain; it reads VPAECPELTR…DKYYAGLPPE (214 aa). Residues Cys-154 and Cys-159 are joined by a disulfide bond.

This sequence belongs to the herpesviridae glycoprotein L (gL) family. Betaherpesvirinae gL subfamily. As to quaternary structure, interacts with glycoprotein H (gH); this interaction is necessary for the correct processing and cell surface expression of gH. Forms the envelope pentamer complex (PC) composed of gH, gL, UL128, UL130, and UL131A. The pentamer interacts with host NRP2. Forms the envelope trimer complex composed of gH, gL, and gO. The trimer interacts with host PDGFRA. The trimer also interacts with host EPHA2.

Its subcellular location is the virion membrane. The protein localises to the host cell membrane. It localises to the host Golgi apparatus. The protein resides in the host trans-Golgi network. The heterodimer glycoprotein H-glycoprotein L is required for the fusion of viral and plasma membranes leading to virus entry into the host cell. Acts as a functional inhibitor of gH and maintains gH in an inhibited form. Upon binding to host integrins, gL dissociates from gH leading to activation of the viral fusion glycoproteins gB and gH. In human cytomegalovirus, forms two distincts complexes to mediate viral entry, a trimer and a pentamer at the surface of the virion envelope. The gH-gL-gO trimer is required for infection in fibroblasts by interacting with host PDGFRA, and in glioblastoma cells by interacting with host EPHA2. The gH-gL-UL128-UL130-UL131A pentamer is essential for viral entry in epithelial, endothelial and myeloid cells via interaction with host NRP2. The polypeptide is Envelope glycoprotein L (Human cytomegalovirus (strain 5035) (HHV-5)).